Reading from the N-terminus, the 205-residue chain is Methylamine utilization protein MauD (205 aa).

The helical transmembrane segment at 5 to 25 (IMIASNVLLWGAFLALAALML) threads the bilayer. In terms of domain architecture, Thioredoxin spans 50 to 184 (PDIGERSPVF…VESLFETTRV (135 aa)).

The protein localises to the membrane. The protein operates within one-carbon metabolism; methylamine degradation. Functionally, may be specifically involved in the processing, transport, and/or maturation of the MADH beta-subunit. This is Methylamine utilization protein MauD (mauD) from Methylobacillus flagellatus (strain ATCC 51484 / DSM 6875 / VKM B-1610 / KT).